Consider the following 715-residue polypeptide: Polyribonucleotide nucleotidyltransferase (715 aa).

Mg(2+) is bound by residues Asp495 and Asp501. The KH domain maps to 562–621 (PRLLTLQIPPDMIGLVIGPGGKTVRGISEQYNVKVDISEEGLVTITAPNETNAKQARAAI). The region spanning 631–699 (GDVYLGRVTR…SKGRINLTRL (69 aa)) is the S1 motif domain.

Belongs to the polyribonucleotide nucleotidyltransferase family. Mg(2+) serves as cofactor.

It localises to the cytoplasm. The enzyme catalyses RNA(n+1) + phosphate = RNA(n) + a ribonucleoside 5'-diphosphate. In terms of biological role, involved in mRNA degradation. Catalyzes the phosphorolysis of single-stranded polyribonucleotides processively in the 3'- to 5'-direction. The sequence is that of Polyribonucleotide nucleotidyltransferase from Thermosynechococcus vestitus (strain NIES-2133 / IAM M-273 / BP-1).